Here is a 110-residue protein sequence, read N- to C-terminus: Large ribosomal subunit protein uL22 (110 aa).

It belongs to the universal ribosomal protein uL22 family. As to quaternary structure, part of the 50S ribosomal subunit.

This protein binds specifically to 23S rRNA; its binding is stimulated by other ribosomal proteins, e.g. L4, L17, and L20. It is important during the early stages of 50S assembly. It makes multiple contacts with different domains of the 23S rRNA in the assembled 50S subunit and ribosome. In terms of biological role, the globular domain of the protein is located near the polypeptide exit tunnel on the outside of the subunit, while an extended beta-hairpin is found that lines the wall of the exit tunnel in the center of the 70S ribosome. The polypeptide is Large ribosomal subunit protein uL22 (Histophilus somni (strain 129Pt) (Haemophilus somnus)).